The following is a 363-amino-acid chain: Biotin synthase (363 aa).

Phosphoserine occurs at positions 13, 14, and 17. The Radical SAM core domain occupies lysine 54 to lysine 276. Residues cysteine 69, cysteine 73, and cysteine 76 each coordinate [4Fe-4S] cluster. 4 residues coordinate [2Fe-2S] cluster: cysteine 113, cysteine 146, cysteine 206, and arginine 280. The segment at glutamate 337 to leucine 363 is disordered.

Belongs to the radical SAM superfamily. Biotin synthase family. It depends on [4Fe-4S] cluster as a cofactor. [2Fe-2S] cluster serves as cofactor.

It carries out the reaction (4R,5S)-dethiobiotin + (sulfur carrier)-SH + 2 reduced [2Fe-2S]-[ferredoxin] + 2 S-adenosyl-L-methionine = (sulfur carrier)-H + biotin + 2 5'-deoxyadenosine + 2 L-methionine + 2 oxidized [2Fe-2S]-[ferredoxin]. It functions in the pathway cofactor biosynthesis; biotin biosynthesis; biotin from 7,8-diaminononanoate: step 2/2. Functionally, catalyzes the last step of biotin biosynthesis, the conversion of dethiobiotin to biotin. This is Biotin synthase (bio2) from Schizosaccharomyces pombe (strain 972 / ATCC 24843) (Fission yeast).